The chain runs to 319 residues: MDSREDMVPDVLLEAPNPRRRQSADTSTERPTRPARREQGYARVTPRGERMGNHKARVAKPDFFAWFDPRWLWVPLMVCLAVGGYWAYEPLEKLLERPFKSVVVEGEFHFITKARATELISDEIDNNFLQLDLMRLKRTLTDDPWVDSVSLQRRWPDTLVVKIAEQKPIARWGDGFLNQRGQIVRVKEIDRLSGLPWLQGNESDAVEILQQYQDLSQLLRSRGLDVIALKCDNKKSWRLTLKNDVEIAIGRDKVMEKMRRFVTVYDTHLNSVWIDIAAIDVRYSNGLAVRWVEGSESAKKYLRAAAATTNATRNAPTHP.

Residues 1-53 form a disordered region; it reads MDSREDMVPDVLLEAPNPRRRQSADTSTERPTRPARREQGYARVTPRGERMGN. Residues 1 to 70 lie on the Cytoplasmic side of the membrane; it reads MDSREDMVPD…PDFFAWFDPR (70 aa). A compositionally biased stretch (basic and acidic residues) spans 27-52; it reads STERPTRPARREQGYARVTPRGERMG. The chain crosses the membrane as a helical span at residues 71–87; that stretch reads WLWVPLMVCLAVGGYWA. Residues 88–319 are Periplasmic-facing; sequence YEPLEKLLER…NATRNAPTHP (232 aa). Residues 97–166 form the POTRA domain; that stretch reads RPFKSVVVEG…DTLVVKIAEQ (70 aa).

It belongs to the FtsQ/DivIB family. FtsQ subfamily. In terms of assembly, part of a complex composed of FtsB, FtsL and FtsQ.

Its subcellular location is the cell inner membrane. Functionally, essential cell division protein. May link together the upstream cell division proteins, which are predominantly cytoplasmic, with the downstream cell division proteins, which are predominantly periplasmic. May control correct divisome assembly. This is Cell division protein FtsQ from Cellvibrio japonicus (strain Ueda107) (Pseudomonas fluorescens subsp. cellulosa).